We begin with the raw amino-acid sequence, 194 residues long: ATP-dependent Clp protease proteolytic subunit (194 aa).

Residue Ser98 is the Nucleophile of the active site. His123 is an active-site residue.

It belongs to the peptidase S14 family. In terms of assembly, fourteen ClpP subunits assemble into 2 heptameric rings which stack back to back to give a disk-like structure with a central cavity, resembling the structure of eukaryotic proteasomes.

It is found in the cytoplasm. The catalysed reaction is Hydrolysis of proteins to small peptides in the presence of ATP and magnesium. alpha-casein is the usual test substrate. In the absence of ATP, only oligopeptides shorter than five residues are hydrolyzed (such as succinyl-Leu-Tyr-|-NHMec, and Leu-Tyr-Leu-|-Tyr-Trp, in which cleavage of the -Tyr-|-Leu- and -Tyr-|-Trp bonds also occurs).. Its function is as follows. Cleaves peptides in various proteins in a process that requires ATP hydrolysis. Has a chymotrypsin-like activity. Plays a major role in the degradation of misfolded proteins. The chain is ATP-dependent Clp protease proteolytic subunit from Aliarcobacter butzleri (strain RM4018) (Arcobacter butzleri).